Reading from the N-terminus, the 538-residue chain is Putative outer membrane porin BglH (538 aa).

The signal sequence occupies residues 1 to 25 (MFRQNLITSAILLMAPLAFSAQSLA). The disordered stretch occupies residues 52–82 (KDEEKKKYTPATVNRSVSTNDQGYAANPFPT). Residues 62 to 73 (ATVNRSVSTNDQ) are compositionally biased toward polar residues.

This sequence belongs to the porin LamB (TC 1.B.3) family.

The protein resides in the cell outer membrane. May be a sugar porin with a broad carbohydrate specificity. In Shigella flexneri, this protein is Putative outer membrane porin BglH (bglH).